The sequence spans 371 residues: Cytochrome b (371 aa).

4 consecutive transmembrane segments (helical) span residues 25-45 (FGSM…FLAI), 69-90 (WTMQ…YTHI), 105-125 (WLSG…GYVL), and 170-190 (FFAL…VHII). His75 and His89 together coordinate heme b. 2 residues coordinate heme b: His174 and His188. His193 contributes to the a ubiquinone binding site. The next 4 membrane-spanning stretches (helical) occupy residues 218–238 (YKDM…MSFS), 280–300 (LGGT…PFTH), 312–332 (FTQL…WTAT), and 339–358 (FILI…IINP).

It belongs to the cytochrome b family. As to quaternary structure, the cytochrome bc1 complex contains 3 respiratory subunits (MT-CYB, CYC1 and UQCRFS1), 2 core proteins (UQCRC1 and UQCRC2) and probably 6 low-molecular weight proteins. It depends on heme b as a cofactor.

The protein resides in the mitochondrion inner membrane. Functionally, component of the ubiquinol-cytochrome c reductase complex (complex III or cytochrome b-c1 complex) that is part of the mitochondrial respiratory chain. The b-c1 complex mediates electron transfer from ubiquinol to cytochrome c. Contributes to the generation of a proton gradient across the mitochondrial membrane that is then used for ATP synthesis. The sequence is that of Cytochrome b (MT-CYB) from Elapognathus coronatus (Western crowned snake).